Here is a 472-residue protein sequence, read N- to C-terminus: Sulfate adenylyltransferase subunit 1 (472 aa).

Positions 22 to 239 (KELLRFLTCG…TVPIAGDKNY (218 aa)) constitute a tr-type G domain. The segment at 31-38 (GSVDDGKS) is G1. GTP is bound at residue 31-38 (GSVDDGKS). Positions 89-93 (GITID) are G2. Residues 110–113 (DTPG) are G3. Residues 110 to 114 (DTPGH) and 165 to 168 (NKMD) each bind GTP. Residues 165-168 (NKMD) are G4. The tract at residues 202-204 (SAL) is G5.

The protein belongs to the TRAFAC class translation factor GTPase superfamily. Classic translation factor GTPase family. CysN/NodQ subfamily. In terms of assembly, heterodimer composed of CysD, the smaller subunit, and CysN.

The enzyme catalyses sulfate + ATP + H(+) = adenosine 5'-phosphosulfate + diphosphate. It functions in the pathway sulfur metabolism; hydrogen sulfide biosynthesis; sulfite from sulfate: step 1/3. In terms of biological role, with CysD forms the ATP sulfurylase (ATPS) that catalyzes the adenylation of sulfate producing adenosine 5'-phosphosulfate (APS) and diphosphate, the first enzymatic step in sulfur assimilation pathway. APS synthesis involves the formation of a high-energy phosphoric-sulfuric acid anhydride bond driven by GTP hydrolysis by CysN coupled to ATP hydrolysis by CysD. This Cellvibrio japonicus (strain Ueda107) (Pseudomonas fluorescens subsp. cellulosa) protein is Sulfate adenylyltransferase subunit 1.